Consider the following 684-residue polypeptide: Glycine--tRNA ligase beta subunit (684 aa).

The protein belongs to the class-II aminoacyl-tRNA synthetase family. As to quaternary structure, tetramer of two alpha and two beta subunits.

Its subcellular location is the cytoplasm. The enzyme catalyses tRNA(Gly) + glycine + ATP = glycyl-tRNA(Gly) + AMP + diphosphate. The chain is Glycine--tRNA ligase beta subunit from Pseudomonas fluorescens (strain ATCC BAA-477 / NRRL B-23932 / Pf-5).